The sequence spans 758 residues: 5-methyltetrahydropteroyltriglutamate--homocysteine methyltransferase (758 aa).

Residues arginine 16–lysine 19 and lysine 116 contribute to the 5-methyltetrahydropteroyltri-L-glutamate site. Residues isoleucine 436–serine 438 and glutamate 489 each bind L-homocysteine. Residues isoleucine 436–serine 438 and glutamate 489 each bind L-methionine. Residues arginine 520–cysteine 521 and tryptophan 566 each bind 5-methyltetrahydropteroyltri-L-glutamate. Aspartate 604 lines the L-homocysteine pocket. Position 604 (aspartate 604) interacts with L-methionine. Residue glutamate 610 participates in 5-methyltetrahydropteroyltri-L-glutamate binding. Positions 646, 648, and 670 each coordinate Zn(2+). Catalysis depends on histidine 699, which acts as the Proton donor. Zn(2+) is bound at residue cysteine 731.

The protein belongs to the vitamin-B12 independent methionine synthase family. Requires Zn(2+) as cofactor.

It catalyses the reaction 5-methyltetrahydropteroyltri-L-glutamate + L-homocysteine = tetrahydropteroyltri-L-glutamate + L-methionine. It functions in the pathway amino-acid biosynthesis; L-methionine biosynthesis via de novo pathway; L-methionine from L-homocysteine (MetE route): step 1/1. Functionally, catalyzes the transfer of a methyl group from 5-methyltetrahydrofolate to homocysteine resulting in methionine formation. This Xylella fastidiosa (strain 9a5c) protein is 5-methyltetrahydropteroyltriglutamate--homocysteine methyltransferase.